The sequence spans 208 residues: Probable GTP-binding protein EngB (208 aa).

Positions 18 to 187 constitute an EngB-type G domain; it reads KQFEICVIGR…FALMKKVVIQ (170 aa). GTP contacts are provided by residues 26–33, 52–56, 69–72, 135–138, and 166–168; these read GRSNVGKS, GRTQL, DLPG, NKLD, and VSA. Mg(2+) contacts are provided by S33 and T54.

It belongs to the TRAFAC class TrmE-Era-EngA-EngB-Septin-like GTPase superfamily. EngB GTPase family. Mg(2+) is required as a cofactor.

In terms of biological role, necessary for normal cell division and for the maintenance of normal septation. In Ureaplasma parvum serovar 3 (strain ATCC 27815 / 27 / NCTC 11736), this protein is Probable GTP-binding protein EngB.